Consider the following 527-residue polypeptide: Lysine--tRNA ligase (527 aa).

The 'HIGH' region signature appears at 44 to 52 (PSGLPHIGT). Positions 290–294 (KISKS) match the 'KMSKS' region motif. Position 293 (lysine 293) interacts with ATP.

Belongs to the class-I aminoacyl-tRNA synthetase family.

Its subcellular location is the cytoplasm. The catalysed reaction is tRNA(Lys) + L-lysine + ATP = L-lysyl-tRNA(Lys) + AMP + diphosphate. The polypeptide is Lysine--tRNA ligase (Roseobacter denitrificans (strain ATCC 33942 / OCh 114) (Erythrobacter sp. (strain OCh 114))).